Reading from the N-terminus, the 142-residue chain is Hemoglobin subunit epsilon (142 aa).

A Globin domain is found at 3–142 (HFTAEEKAAI…KLVSAVAIAL (140 aa)). Residues S14 and S51 each carry the phosphoserine modification. H64 and H93 together coordinate heme b.

This sequence belongs to the globin family. As to quaternary structure, heterotetramer of two alpha chains and two epsilon chains in early embryonic hemoglobin Gower-2; two zeta chains and two epsilon chains in early embryonic hemoglobin Gower-1. In terms of tissue distribution, red blood cells.

Its function is as follows. The epsilon chain is a beta-type chain of early mammalian embryonic hemoglobin. The sequence is that of Hemoglobin subunit epsilon (HBE1) from Callithrix geoffroyi (Geoffroy's marmoset).